The primary structure comprises 53 residues: Large ribosomal subunit protein bL33A (53 aa).

It belongs to the bacterial ribosomal protein bL33 family.

This chain is Large ribosomal subunit protein bL33A (rpmG1), found in Mycoplasma genitalium (strain ATCC 33530 / DSM 19775 / NCTC 10195 / G37) (Mycoplasmoides genitalium).